The following is a 206-amino-acid chain: Small ribosomal subunit protein uS4 (206 aa).

Residues 96–160 (CRLDNVVYRM…AQLRIVQALE (65 aa)) enclose the S4 RNA-binding domain.

This sequence belongs to the universal ribosomal protein uS4 family. In terms of assembly, part of the 30S ribosomal subunit. Contacts protein S5. The interaction surface between S4 and S5 is involved in control of translational fidelity.

Its function is as follows. One of the primary rRNA binding proteins, it binds directly to 16S rRNA where it nucleates assembly of the body of the 30S subunit. In terms of biological role, with S5 and S12 plays an important role in translational accuracy. The chain is Small ribosomal subunit protein uS4 from Pseudomonas putida (strain GB-1).